Reading from the N-terminus, the 196-residue chain is ATP-dependent Clp protease proteolytic subunit (196 aa).

Catalysis depends on Ser101, which acts as the Nucleophile. His126 is a catalytic residue.

The protein belongs to the peptidase S14 family. Component of the chloroplastic Clp protease core complex.

Its subcellular location is the plastid. It localises to the chloroplast stroma. It catalyses the reaction Hydrolysis of proteins to small peptides in the presence of ATP and magnesium. alpha-casein is the usual test substrate. In the absence of ATP, only oligopeptides shorter than five residues are hydrolyzed (such as succinyl-Leu-Tyr-|-NHMec, and Leu-Tyr-Leu-|-Tyr-Trp, in which cleavage of the -Tyr-|-Leu- and -Tyr-|-Trp bonds also occurs).. Its function is as follows. Cleaves peptides in various proteins in a process that requires ATP hydrolysis. Has a chymotrypsin-like activity. Plays a major role in the degradation of misfolded proteins. In Pinus thunbergii (Japanese black pine), this protein is ATP-dependent Clp protease proteolytic subunit.